Here is a 445-residue protein sequence, read N- to C-terminus: Protein cereblon (445 aa).

A disordered region spans residues M1 to F50. Acidic residues predominate over residues E23–D36. The 240-residue stretch at I82–T321 folds into the Lon N-terminal domain. The 109-residue stretch at C320–I428 folds into the CULT domain. The Zn(2+) site is built by C325 and C328. (S)-thalidomide-binding residues include H380, W382, and W388. C393 and C396 together coordinate Zn(2+).

This sequence belongs to the CRBN family. As to quaternary structure, component of a DCX (DDB1-CUL4-X-box) protein ligase complex. Interacts directly with DDB1.

The protein localises to the cytoplasm. It is found in the nucleus. Its pathway is protein modification; protein ubiquitination. In terms of biological role, substrate recognition component of a DCX (DDB1-CUL4-X-box) E3 protein ligase complex that mediates the ubiquitination and subsequent proteasomal degradation of target proteins, such as MEIS2. Normal degradation of key regulatory proteins is required for normal limb outgrowth and expression of the fibroblast growth factor FGF8. Maintains presynaptic glutamate release and consequently cognitive functions, such as memory and learning, by negatively regulating large-conductance calcium-activated potassium (BK) channels in excitatory neurons. Likely to function by regulating the assembly and neuronal surface expression of BK channels via its interaction with KCNT1. May also be involved in regulating anxiety-like behaviors via a BK channel-independent mechanism. The protein is Protein cereblon (CRBN) of Gallus gallus (Chicken).